Reading from the N-terminus, the 82-residue chain is MVTIRLARHGAKKRPFYQVVVTDSRNARNGRFIERVGFFNPIASGQAEALRLDLDRIEHWVGQGATLSDRVNALIKQAKKAA.

This sequence belongs to the bacterial ribosomal protein bS16 family.

The sequence is that of Small ribosomal subunit protein bS16 from Erwinia tasmaniensis (strain DSM 17950 / CFBP 7177 / CIP 109463 / NCPPB 4357 / Et1/99).